A 177-amino-acid chain; its full sequence is MNLNLILPLKKVVLPISNKEVSIPKMGLKHYNILKDVKGPDENLKLLIDSICPNLSPAEVDFVSIHLLEFNGKIKSRKEIDGYTYDINDVYVCQRLEFQYQGNTFYFRPPGKFEQFLTVSDMLSKCLLRVNDEVKEINFLEMPAFVLKWANDIFTTLAIPGPNGPITGIGNIIGLFE.

In terms of assembly, the gp27 and gp28 proteins seem to combine to form a small hub precursor during morphogenesis.

In terms of biological role, baseplate hub assembly chaperone involved in the tail assembly. The polypeptide is Baseplate hub assembly protein gp28 (28) (Enterobacteria phage T4 (Bacteriophage T4)).